The chain runs to 258 residues: Small ribosomal subunit protein mS23 (258 aa).

This sequence belongs to the mitochondrion-specific ribosomal protein mS23 family. In terms of assembly, component of the mitochondrial small ribosomal subunit.

It localises to the mitochondrion. This chain is Small ribosomal subunit protein mS23 (rsm25), found in Aspergillus fumigatus (strain ATCC MYA-4609 / CBS 101355 / FGSC A1100 / Af293) (Neosartorya fumigata).